Reading from the N-terminus, the 527-residue chain is MASDFLPVRRALLSVSDKTGLIDLARALVARNVELLSTGGTAKAIREAGLPVKDVAELTGFPEMMDGRVKTLHPLVHGGLLGRAGIDEAVMAEHGIAPIDLLVLNLYPFESVTVKTDCTLADAVENIDIGGPAMLRSAAKNFARVAVATDPAQYADLLAELEANNGQLSAAKRFALSVAAFNRVAQYDAAISNYLSAVADSAETVPTRNPFPAQINSNFVKVMDLRYGENPHQSGAFYRDLYPVPGTLATFQQLQGKELSYNNLADADAAWECVRQFDAPACVIVKHANPCGVAVGAGCGDAYELAYATDPTSAFGSILAFNKTLDAATAKAILDRQFVEVLIAPDYDAGALDYATKKANVRVLKIPHGNGLNNYDTKRIGSGLLMQSADNRGMSLGELSVVTQRAPSEAELGDLLFAWRVAKYVKSNAIVYAKDSRTIGVGAGQMSRVVSAKIAALKAEEAKLTVVGSVMASDAFFPFRDGIDAAASAGIQAVIQPGGSMRDGEVIAAADEHGIAMVFTGVRHFRH.

One can recognise an MGS-like domain in the interval 1 to 149; the sequence is MASDFLPVRR…KNFARVAVAT (149 aa).

It belongs to the PurH family.

It catalyses the reaction (6R)-10-formyltetrahydrofolate + 5-amino-1-(5-phospho-beta-D-ribosyl)imidazole-4-carboxamide = 5-formamido-1-(5-phospho-D-ribosyl)imidazole-4-carboxamide + (6S)-5,6,7,8-tetrahydrofolate. The enzyme catalyses IMP + H2O = 5-formamido-1-(5-phospho-D-ribosyl)imidazole-4-carboxamide. It participates in purine metabolism; IMP biosynthesis via de novo pathway; 5-formamido-1-(5-phospho-D-ribosyl)imidazole-4-carboxamide from 5-amino-1-(5-phospho-D-ribosyl)imidazole-4-carboxamide (10-formyl THF route): step 1/1. The protein operates within purine metabolism; IMP biosynthesis via de novo pathway; IMP from 5-formamido-1-(5-phospho-D-ribosyl)imidazole-4-carboxamide: step 1/1. This chain is Bifunctional purine biosynthesis protein PurH, found in Xanthomonas oryzae pv. oryzae (strain MAFF 311018).